A 269-amino-acid polypeptide reads, in one-letter code: Tryptophan synthase alpha chain (269 aa).

Residues Glu-49 and Asp-60 each act as proton acceptor in the active site.

This sequence belongs to the TrpA family. Tetramer of two alpha and two beta chains.

The enzyme catalyses (1S,2R)-1-C-(indol-3-yl)glycerol 3-phosphate + L-serine = D-glyceraldehyde 3-phosphate + L-tryptophan + H2O. It participates in amino-acid biosynthesis; L-tryptophan biosynthesis; L-tryptophan from chorismate: step 5/5. Functionally, the alpha subunit is responsible for the aldol cleavage of indoleglycerol phosphate to indole and glyceraldehyde 3-phosphate. This is Tryptophan synthase alpha chain from Photobacterium profundum (strain SS9).